Here is a 62-residue protein sequence, read N- to C-terminus: Cryptic Mu-phage protein com (62 aa).

Belongs to the com family.

This chain is Cryptic Mu-phage protein com, found in Shigella dysenteriae.